Here is a 117-residue protein sequence, read N- to C-terminus: Photosystem II reaction center Psb28 protein (117 aa).

This sequence belongs to the Psb28 family. In terms of assembly, part of the photosystem II complex.

The protein localises to the cellular thylakoid membrane. In Prochlorococcus marinus (strain MIT 9312), this protein is Photosystem II reaction center Psb28 protein.